The primary structure comprises 392 residues: Mycofactocin maturase MftC (392 aa).

The 211-residue stretch at 18–228 (LDAPICLTWE…YDWLVAKGDR (211 aa)) folds into the Radical SAM core domain. The [4Fe-4S] cluster site is built by C32, C36, C39, C253, C260, C271, C312, C315, C321, C325, and C343. The segment covering 354–367 (KERVKPKPSGDHSR) has biased composition (basic and acidic residues). Positions 354–377 (KERVKPKPSGDHSRGTKQGPVALK) are disordered.

The protein belongs to the radical SAM superfamily. MftC family. [4Fe-4S] cluster serves as cofactor.

It catalyses the reaction [mycofactocin precursor peptide]-C-terminal glycyl-L-valyl-L-tyrosine + S-adenosyl-L-methionine = [mycofactocin precursor peptide]-C-terminal glycyl-N-{[2-(4-hydroxyphenyl)ethenyl]-3-methylbutanamide} + 5'-deoxyadenosine + L-methionine + CO2. The catalysed reaction is [mycofactocin precursor peptide]-C-terminal glycyl-N-{[2-(4-hydroxyphenyl)ethenyl]-3-methylbutanamide} + AH2 + S-adenosyl-L-methionine = [mycofactocin precursor peptide]-C-terminal glycyl-N-{5-[(4-hydroxyphenyl)methyl]-4,4-dimethyl-2-oxopyrrolidin-3-yl}acetamide + 5'-deoxyadenosine + L-methionine + A + H(+). Radical S-adenosylmethionine (SAM) enzyme responsible for the first step of the biosynthesis of the enzyme cofactor mycofactocin (MFT). Catalyzes two reactions at the C-terminus of the mycofactocin precursor (the MftA peptide). The first one is the oxidative decarboxylation of the C-terminal L-tyrosine of MftA, forming an unsaturated tyramine moiety. The second reaction is the cross-linking of the tyramine with the penultimate L-valine residue, forming a five-membered lactam ring. Its activity requires the presence of the MftB chaperone. Is required for the in vivo ethanol assimilation in M.smegmatis. The chain is Mycofactocin maturase MftC from Mycolicibacterium smegmatis (strain ATCC 700084 / mc(2)155) (Mycobacterium smegmatis).